The chain runs to 351 residues: Probable aldo-keto reductase 2 (351 aa).

Catalysis depends on tyrosine 67, which acts as the Proton donor. Histidine 134 is a binding site for substrate. 213-223 (SPLGRGFFSAG) provides a ligand contact to NADP(+). The tract at residues 317 to 351 (YASTDDVRGDRYPQAMANTTWQNSETPPLSSWKAQ) is disordered. Positions 332-351 (MANTTWQNSETPPLSSWKAQ) are enriched in polar residues.

This sequence belongs to the aldo/keto reductase family.

The chain is Probable aldo-keto reductase 2 from Oryza sativa subsp. indica (Rice).